Here is a 186-residue protein sequence, read N- to C-terminus: TATA box-binding protein-like 1 (186 aa).

The protein belongs to the TBP family. As to quaternary structure, binds TFIIA and TFIIB.

The protein resides in the cytoplasm. It localises to the nucleus. In terms of biological role, part of a specialized transcription system that mediates the transcription of most ribosomal proteins through the 5'-TCT-3' motif which is a core promoter element at these genes. Seems to also mediate the transcription of NF1. Does not bind the TATA box. This Bos taurus (Bovine) protein is TATA box-binding protein-like 1 (TBPL1).